The primary structure comprises 169 residues: Phosphopantetheine adenylyltransferase (169 aa).

S10 lines the substrate pocket. ATP is bound by residues 10 to 11 (SF) and H18. Substrate-binding residues include K42, T79, and R93. ATP-binding positions include 94–96 (GLR), E104, and 129–135 (VRPITAT).

It belongs to the bacterial CoaD family. As to quaternary structure, homohexamer. Mg(2+) is required as a cofactor.

Its subcellular location is the cytoplasm. The catalysed reaction is (R)-4'-phosphopantetheine + ATP + H(+) = 3'-dephospho-CoA + diphosphate. It participates in cofactor biosynthesis; coenzyme A biosynthesis; CoA from (R)-pantothenate: step 4/5. Its function is as follows. Reversibly transfers an adenylyl group from ATP to 4'-phosphopantetheine, yielding dephospho-CoA (dPCoA) and pyrophosphate. This Rhodopseudomonas palustris (strain ATCC BAA-98 / CGA009) protein is Phosphopantetheine adenylyltransferase.